Here is a 237-residue protein sequence, read N- to C-terminus: Sugar fermentation stimulation protein homolog (237 aa).

The protein belongs to the SfsA family.

This chain is Sugar fermentation stimulation protein homolog, found in Synechocystis sp. (strain ATCC 27184 / PCC 6803 / Kazusa).